A 58-amino-acid chain; its full sequence is Potassium channel toxin Ts16 (58 aa).

The signal sequence occupies residues 1–16 (MHSSVFILILFSLAVI). 3 disulfide bridges follow: cysteine 29-cysteine 51, cysteine 34-cysteine 47, and cysteine 38-cysteine 53.

Expressed by the venom gland.

The protein resides in the secreted. Blocks potassium channels. In Tityus serrulatus (Brazilian scorpion), this protein is Potassium channel toxin Ts16.